Consider the following 129-residue polypeptide: Large ribosomal subunit protein bL17 (129 aa).

It belongs to the bacterial ribosomal protein bL17 family. In terms of assembly, part of the 50S ribosomal subunit. Contacts protein L32.

The protein is Large ribosomal subunit protein bL17 of Thiobacillus denitrificans (strain ATCC 25259 / T1).